The following is a 228-amino-acid chain: UPF0758 protein str1465 (228 aa).

Residues 103 to 225 (QIMSSQQVAR…YYSFREERED (123 aa)) form the MPN domain. Positions 174, 176, and 187 each coordinate Zn(2+). Positions 174–187 (HNHPSGEAYPSRND) match the JAMM motif motif.

The protein belongs to the UPF0758 family.

This is UPF0758 protein str1465 from Streptococcus thermophilus (strain CNRZ 1066).